Here is a 217-residue protein sequence, read N- to C-terminus: tRNA (guanine-N(7)-)-methyltransferase (217 aa).

Positions 43, 68, 101, and 123 each coordinate S-adenosyl-L-methionine. A substrate-binding site is contributed by K127. The interval 129-134 (RHNKRR) is interaction with RNA. Substrate contacts are provided by residues D159 and 196–199 (TEYE).

This sequence belongs to the class I-like SAM-binding methyltransferase superfamily. TrmB family.

The catalysed reaction is guanosine(46) in tRNA + S-adenosyl-L-methionine = N(7)-methylguanosine(46) in tRNA + S-adenosyl-L-homocysteine. It participates in tRNA modification; N(7)-methylguanine-tRNA biosynthesis. Its function is as follows. Catalyzes the formation of N(7)-methylguanine at position 46 (m7G46) in tRNA. This chain is tRNA (guanine-N(7)-)-methyltransferase, found in Clostridium botulinum (strain 657 / Type Ba4).